We begin with the raw amino-acid sequence, 21 residues long: Helicopsin (21 aa).

It belongs to the CRISP family. Post-translationally, contains 8 disulfide bonds. As to expression, expressed by the salivary gland.

Its subcellular location is the secreted. In terms of biological role, helicopsin exhibits robust neurotoxic activity as shown by immediate death (about 8 minutes) of mice due to respiratory paralysis. The polypeptide is Helicopsin (Helicops angulatus (South American water snake)).